A 301-amino-acid chain; its full sequence is Ornithine carbamoyltransferase (301 aa).

Carbamoyl phosphate-binding positions include serine 47 to threonine 50, glutamine 74, arginine 98, and histidine 125 to glutamine 128. L-ornithine-binding positions include asparagine 156, aspartate 220, and serine 224–methionine 225. Carbamoyl phosphate-binding positions include cysteine 260–leucine 261 and arginine 288.

It belongs to the aspartate/ornithine carbamoyltransferase superfamily. OTCase family.

The protein resides in the cytoplasm. The catalysed reaction is carbamoyl phosphate + L-ornithine = L-citrulline + phosphate + H(+). It functions in the pathway amino-acid biosynthesis; L-arginine biosynthesis; L-arginine from L-ornithine and carbamoyl phosphate: step 1/3. Reversibly catalyzes the transfer of the carbamoyl group from carbamoyl phosphate (CP) to the N(epsilon) atom of ornithine (ORN) to produce L-citrulline. This is Ornithine carbamoyltransferase from Picrophilus torridus (strain ATCC 700027 / DSM 9790 / JCM 10055 / NBRC 100828 / KAW 2/3).